The chain runs to 383 residues: ATP phosphoribosyltransferase regulatory subunit (383 aa).

Belongs to the class-II aminoacyl-tRNA synthetase family. HisZ subfamily. In terms of assembly, heteromultimer composed of HisG and HisZ subunits.

The protein resides in the cytoplasm. The protein operates within amino-acid biosynthesis; L-histidine biosynthesis; L-histidine from 5-phospho-alpha-D-ribose 1-diphosphate: step 1/9. Required for the first step of histidine biosynthesis. May allow the feedback regulation of ATP phosphoribosyltransferase activity by histidine. The polypeptide is ATP phosphoribosyltransferase regulatory subunit (Paraburkholderia phytofirmans (strain DSM 17436 / LMG 22146 / PsJN) (Burkholderia phytofirmans)).